The primary structure comprises 614 residues: Chaperone protein DnaK (614 aa).

T173 bears the Phosphothreonine; by autocatalysis mark. Composition is skewed to basic and acidic residues over residues 490-509 (EENAEADKKRREESDLRNEA) and 529-542 (EEDKQNAEDKKEAL). Disordered regions lie at residues 490–510 (EENAEADKKRREESDLRNEAD), 524–555 (GENISEEDKQNAEDKKEALKSALEGEDIDDIK), and 575–614 (QAAQAQQQAQGEDANASQDSNVEDADFKEVKDDDNQDNQK). Low complexity predominate over residues 575 to 584 (QAAQAQQQAQ). Positions 599–614 (ADFKEVKDDDNQDNQK) are enriched in basic and acidic residues.

It belongs to the heat shock protein 70 family.

Its function is as follows. Acts as a chaperone. The polypeptide is Chaperone protein DnaK (Staphylococcus saprophyticus subsp. saprophyticus (strain ATCC 15305 / DSM 20229 / NCIMB 8711 / NCTC 7292 / S-41)).